A 293-amino-acid polypeptide reads, in one-letter code: 1D-myo-inositol 2-acetamido-2-deoxy-alpha-D-glucopyranoside deacetylase (293 aa).

Zn(2+) contacts are provided by histidine 15, aspartate 18, and histidine 148.

It belongs to the MshB deacetylase family. Requires Zn(2+) as cofactor.

The catalysed reaction is 1D-myo-inositol 2-acetamido-2-deoxy-alpha-D-glucopyranoside + H2O = 1D-myo-inositol 2-amino-2-deoxy-alpha-D-glucopyranoside + acetate. Catalyzes the deacetylation of 1D-myo-inositol 2-acetamido-2-deoxy-alpha-D-glucopyranoside (GlcNAc-Ins) in the mycothiol biosynthesis pathway. The chain is 1D-myo-inositol 2-acetamido-2-deoxy-alpha-D-glucopyranoside deacetylase from Corynebacterium diphtheriae (strain ATCC 700971 / NCTC 13129 / Biotype gravis).